Consider the following 897-residue polypeptide: MSHHKRRVYPQAQFGLAQAGQTGYQDVQQPGVLPSQANYQEPVPLVTPIQEVLNNQIDQTADSLHNMQLHNVPDFNQPLQGQLNGPQSPALYQNYNENGMNNYNAAFGNGGTSVKQVNQLYPIDLLSDLPPPIKDLGLPPPPINLSPDIMSVPSDKSNASPDYIRSTLNAVPKTNSLLKKTKLPFALVIKPYQHLNDDVNAPPLNEECLIVRCRRCRSYINPFAKFIEQGRRWRCNFCRLANDLPMQFDQSSIDTNIVNRLDRTEIKNAVMEYVAPKEYTVRPPPPSIYTFIIDVSQNAIKNGLFVSTIETLKQQLEYLPNRDNRTKISIILVDHALHILSIPADDVSNKFRILDVADIDEPYIPLPNSLVVSLSRCKQNVQLALEKIKQLFEINVSTKFALGPALRTAQKLIGGVGGKLIVISASLPNAGIGSLQRRNESGVSGTTKESSQLLSCQDSFYKTFTVECSKTQITIDLFLASDDYVDVATLSNLPRYTAGQTHFYPGYNASNISDFNKFTTEFSKHITMDISFETVMRARGSTGLKTSAFYGHFFNRSSDLCAFSTMPRDQSYVFDISIEDTITTDYCYFQVAVLLSLNNGQRRIRVITLALPTTQSISEVFACVDQQAVAAQITQRAVQKANSSSIDDARDLIQKTTLDILSTYKKELVVTNTGGVVPLKLSTNLRILPLLMHALMKHMAFRAGVVPSDHRAYSLNVLESVPIKSLITSIYPSIYSMHDMGDDCGYTDETGNVILPECINDTAILMEKYGLYLIDNGSELFLWVGGEAVPELLSDVFGVPEMSQVPVGKHDLFRVEGSQFNERVCNIIDQLRTSDDTTVYKTLYIVSGPTINDSFSQGTRELASLRMWAATAFVEDNIMKTLSYREFLEKMKKEVSK.

Zn(2+) is bound by residues C213, C216, C235, and C238. Positions 213 to 238 (CRRCRSYINPFAKFIEQGRRWRCNFC) are zinc finger-like.

This sequence belongs to the SEC23/SEC24 family. SEC24 subfamily. The COPII coat is composed of at least 5 proteins: the SEC23/24 complex, the SEC13/31 complex, and the protein SAR1. Golgi apparatus membrane; Peripheral membrane protein; Cytoplasmic side.

It localises to the cytoplasm. The protein resides in the cytoplasmic vesicle. It is found in the COPII-coated vesicle membrane. The protein localises to the endoplasmic reticulum membrane. Its subcellular location is the golgi apparatus membrane. Component of the coat protein complex II (COPII) which promotes the formation of transport vesicles from the endoplasmic reticulum (ER). The coat has two main functions, the physical deformation of the endoplasmic reticulum membrane into vesicles and the selection of cargo molecules. The polypeptide is Protein transport protein SEC24-1 (SEC241) (Candida glabrata (strain ATCC 2001 / BCRC 20586 / JCM 3761 / NBRC 0622 / NRRL Y-65 / CBS 138) (Yeast)).